The sequence spans 510 residues: Inositol-3-phosphate synthase (510 aa).

Residues Gly70, Gly71, Asn72, Asn73, Asp143, Ile180, Gln190, Arg193, Thr230, Ala231, Asn232, Thr233, Gly281, Ser282, Asp306, Ser309, Asn340, Asn341, Asp342, Lys355, Ala393, Asp394, Asp422, and Ser423 each contribute to the NAD(+) site.

It belongs to the myo-inositol 1-phosphate synthase family. The cofactor is NAD(+).

It localises to the cytoplasm. The protein resides in the cytosol. The protein localises to the nucleus. It carries out the reaction D-glucose 6-phosphate = 1D-myo-inositol 3-phosphate. The protein operates within polyol metabolism; myo-inositol biosynthesis; myo-inositol from D-glucose 6-phosphate: step 1/2. In terms of biological role, key enzyme in myo-inositol biosynthesis pathway that catalyzes the conversion of glucose 6-phosphate to 1-myo-inositol 1-phosphate in a NAD-dependent manner. This chain is Inositol-3-phosphate synthase, found in Brassica napus (Rape).